Here is a 250-residue protein sequence, read N- to C-terminus: Type III pantothenate kinase (250 aa).

Residue 6 to 13 (DVGNTNTV) coordinates ATP. Substrate is bound at residue 103–106 (GADR). Aspartate 105 serves as the catalytic Proton acceptor. Residue aspartate 125 participates in K(+) binding. Position 128 (threonine 128) interacts with ATP. Threonine 180 contributes to the substrate binding site.

This sequence belongs to the type III pantothenate kinase family. In terms of assembly, homodimer. The cofactor is NH4(+). K(+) serves as cofactor.

The protein resides in the cytoplasm. It catalyses the reaction (R)-pantothenate + ATP = (R)-4'-phosphopantothenate + ADP + H(+). It functions in the pathway cofactor biosynthesis; coenzyme A biosynthesis; CoA from (R)-pantothenate: step 1/5. Its function is as follows. Catalyzes the phosphorylation of pantothenate (Pan), the first step in CoA biosynthesis. The polypeptide is Type III pantothenate kinase (Frankia alni (strain DSM 45986 / CECT 9034 / ACN14a)).